The primary structure comprises 493 residues: Acetylcholine receptor subunit beta-type unc-29 (493 aa).

The N-terminal stretch at methionine 1–alanine 26 is a signal peptide. 2 N-linked (GlcNAc...) asparagine glycosylation sites follow: asparagine 25 and asparagine 50. Residues serine 27–phenylalanine 232 lie on the Extracellular side of the membrane. An intrachain disulfide couples cysteine 155 to cysteine 169. Helical transmembrane passes span tyrosine 233–leucine 254, isoleucine 262–serine 280, and tyrosine 296–valine 317. Over tyrosine 318–arginine 445 the chain is Cytoplasmic. Residues leucine 446–alanine 466 traverse the membrane as a helical segment.

It belongs to the ligand-gated ion channel (TC 1.A.9) family. Acetylcholine receptor (TC 1.A.9.1) subfamily. As to quaternary structure, interacts with lev-1. Component of nicotinic acetylcholine receptor composed of 2 non-alpha subunits lev-1 and unc-29, and 3 alpha subunits unc-38, unc-63 and lev-8. Interacts with oig-4. Interacts with crld-1.

The protein localises to the postsynaptic cell membrane. It is found in the cell membrane. Non-alpha subunit of nicotinic acetylcholine receptor (nAChR). Involved in nAChR sensitivity to nicotine and levasimole. In Caenorhabditis elegans, this protein is Acetylcholine receptor subunit beta-type unc-29.